A 507-amino-acid chain; its full sequence is Tryptophan aminotransferase-related protein 2 (507 aa).

The tract at residues 91–135 (PPPHHHHHDAGLATRSSDAAVHRRARTASSMAPSTGKPAVTTDSV) is disordered. Residues Tyr-169, 211 to 212 (ST), Asn-282, 304 to 307 (DLAY), 327 to 330 (TVSK), and Arg-338 each bind pyridoxal 5'-phosphate. Lys-330 is subject to N6-(pyridoxal phosphate)lysine.

It belongs to the alliinase family. It depends on pyridoxal 5'-phosphate as a cofactor. As to expression, widely expressed.

It carries out the reaction L-tryptophan + 2-oxoglutarate = indole-3-pyruvate + L-glutamate. It participates in plant hormone metabolism; auxin biosynthesis. Its function is as follows. Probable tryptophan aminotransferase involved in auxin (IAA) biosynthesis. Required for auxin production to initiate multiple change in growth in response to environmental and developmental cues. Functions upstream of YUCCA1 in auxin biosynthesis. Required for polar auxin transport. The polypeptide is Tryptophan aminotransferase-related protein 2 (Oryza sativa subsp. japonica (Rice)).